The primary structure comprises 491 residues: Trigger factor (491 aa).

The PPIase FKBP-type domain occupies 169-254 (GDRVTIDYLG…VKDVAAAAPI (86 aa)). The segment at 433-491 (KTVSKDELMAEDEAEDKPAKKAPAKKKAAAKAEAGEGEEAAAPKKKAPAKKKAADDSAE) is disordered. Residues 452–461 (KKAPAKKKAA) are compositionally biased toward basic residues.

It belongs to the FKBP-type PPIase family. Tig subfamily.

It localises to the cytoplasm. It catalyses the reaction [protein]-peptidylproline (omega=180) = [protein]-peptidylproline (omega=0). Functionally, involved in protein export. Acts as a chaperone by maintaining the newly synthesized protein in an open conformation. Functions as a peptidyl-prolyl cis-trans isomerase. This Sinorhizobium fredii (strain NBRC 101917 / NGR234) protein is Trigger factor.